A 90-amino-acid polypeptide reads, in one-letter code: Putative beta-neurotoxin RjAa14F (90 aa).

The first 18 residues, 1–18 (MKILIFIIASFMLIGVEC), serve as a signal peptide directing secretion. One can recognise an LCN-type CS-alpha/beta domain in the interval 19–89 (KEGYPTNSEG…VWDPNNNKCV (71 aa)). 4 disulfides stabilise this stretch: cysteine 29/cysteine 88, cysteine 33/cysteine 62, cysteine 40/cysteine 69, and cysteine 44/cysteine 71.

It belongs to the long (4 C-C) scorpion toxin superfamily. Sodium channel inhibitor family. Beta subfamily. As to expression, expressed by the venom gland.

The protein resides in the secreted. Beta toxins bind voltage-independently at site-4 of sodium channels (Nav) and shift the voltage of activation toward more negative potentials thereby affecting sodium channel activation and promoting spontaneous and repetitive firing. The protein is Putative beta-neurotoxin RjAa14F of Rhopalurus junceus (Caribbean blue scorpion).